Consider the following 199-residue polypeptide: Protein-methionine-sulfoxide reductase heme-binding subunit MsrQ (199 aa).

The next 5 membrane-spanning stretches (helical) occupy residues 8-28 (ITWL…WLFW), 82-102 (LWCF…ELGI), 116-136 (PYLT…LTST), 149-169 (FLHN…LWSV), and 171-191 (ILSP…AWRY).

The protein belongs to the MsrQ family. Heterodimer of a catalytic subunit (MsrP) and a heme-binding subunit (MsrQ). It depends on FMN as a cofactor. Heme b is required as a cofactor.

The protein localises to the cell inner membrane. Part of the MsrPQ system that repairs oxidized periplasmic proteins containing methionine sulfoxide residues (Met-O), using respiratory chain electrons. Thus protects these proteins from oxidative-stress damage caused by reactive species of oxygen and chlorine generated by the host defense mechanisms. MsrPQ is essential for the maintenance of envelope integrity under bleach stress, rescuing a wide series of structurally unrelated periplasmic proteins from methionine oxidation. MsrQ provides electrons for reduction to the reductase catalytic subunit MsrP, using the quinone pool of the respiratory chain. The chain is Protein-methionine-sulfoxide reductase heme-binding subunit MsrQ from Enterobacter sp. (strain 638).